A 79-amino-acid polypeptide reads, in one-letter code: DNA gyrase inhibitor YacG (79 aa).

Cys7, Cys10, Cys26, and Cys30 together coordinate Zn(2+).

The protein belongs to the DNA gyrase inhibitor YacG family. As to quaternary structure, interacts with GyrB. Zn(2+) serves as cofactor.

Its function is as follows. Inhibits all the catalytic activities of DNA gyrase by preventing its interaction with DNA. Acts by binding directly to the C-terminal domain of GyrB, which probably disrupts DNA binding by the gyrase. In Shewanella pealeana (strain ATCC 700345 / ANG-SQ1), this protein is DNA gyrase inhibitor YacG.